A 275-amino-acid polypeptide reads, in one-letter code: Rhamnulose-1-phosphate aldolase (275 aa).

The active site involves Glu-117. Residues His-141, His-143, and His-212 each contribute to the Zn(2+) site.

It belongs to the aldolase class II family. RhaD subfamily. As to quaternary structure, homotetramer. The cofactor is Zn(2+).

Its subcellular location is the cytoplasm. The catalysed reaction is L-rhamnulose 1-phosphate = (S)-lactaldehyde + dihydroxyacetone phosphate. The protein operates within carbohydrate degradation; L-rhamnose degradation; glycerone phosphate from L-rhamnose: step 3/3. Its function is as follows. Catalyzes the reversible cleavage of L-rhamnulose-1-phosphate to dihydroxyacetone phosphate (DHAP) and L-lactaldehyde. The polypeptide is Rhamnulose-1-phosphate aldolase (Citrobacter koseri (strain ATCC BAA-895 / CDC 4225-83 / SGSC4696)).